A 157-amino-acid chain; its full sequence is Heavy metal-associated isoprenylated plant protein 16 (157 aa).

The HMA domain maps to 2-71 (KQKILIRIAM…KVAFAELVSV (70 aa)). The tract at residues 73–115 (KVEPPKDGDKKPEEEKKPEEKKPEEKKPEEKKPEPCCQPWQKP) is disordered. Positions 75 to 106 (EPPKDGDKKPEEEKKPEEKKPEEKKPEEKKPE) are enriched in basic and acidic residues. Position 154 is a cysteine methyl ester (C154). C154 carries S-farnesyl cysteine lipidation. Residues 155–157 (RIM) constitute a propeptide, removed in mature form.

It belongs to the HIPP family.

In terms of biological role, probable heavy-metal-binding protein. The protein is Heavy metal-associated isoprenylated plant protein 16 of Arabidopsis thaliana (Mouse-ear cress).